Here is a 286-residue protein sequence, read N- to C-terminus: 4-hydroxy-3-methylbut-2-enyl diphosphate reductase (286 aa).

Cysteine 12 serves as a coordination point for [4Fe-4S] cluster. (2E)-4-hydroxy-3-methylbut-2-enyl diphosphate contacts are provided by histidine 47 and histidine 80. Dimethylallyl diphosphate-binding residues include histidine 47 and histidine 80. Histidine 47 and histidine 80 together coordinate isopentenyl diphosphate. Cysteine 102 is a [4Fe-4S] cluster binding site. Histidine 130 lines the (2E)-4-hydroxy-3-methylbut-2-enyl diphosphate pocket. A dimethylallyl diphosphate-binding site is contributed by histidine 130. Histidine 130 is an isopentenyl diphosphate binding site. The active-site Proton donor is the glutamate 132. Residue threonine 170 coordinates (2E)-4-hydroxy-3-methylbut-2-enyl diphosphate. Cysteine 198 contacts [4Fe-4S] cluster. Residues serine 226, asparagine 228, and serine 270 each contribute to the (2E)-4-hydroxy-3-methylbut-2-enyl diphosphate site. Dimethylallyl diphosphate contacts are provided by serine 226, asparagine 228, and serine 270. Isopentenyl diphosphate contacts are provided by serine 226, asparagine 228, and serine 270.

This sequence belongs to the IspH family. It depends on [4Fe-4S] cluster as a cofactor.

The catalysed reaction is isopentenyl diphosphate + 2 oxidized [2Fe-2S]-[ferredoxin] + H2O = (2E)-4-hydroxy-3-methylbut-2-enyl diphosphate + 2 reduced [2Fe-2S]-[ferredoxin] + 2 H(+). The enzyme catalyses dimethylallyl diphosphate + 2 oxidized [2Fe-2S]-[ferredoxin] + H2O = (2E)-4-hydroxy-3-methylbut-2-enyl diphosphate + 2 reduced [2Fe-2S]-[ferredoxin] + 2 H(+). Its pathway is isoprenoid biosynthesis; dimethylallyl diphosphate biosynthesis; dimethylallyl diphosphate from (2E)-4-hydroxy-3-methylbutenyl diphosphate: step 1/1. It functions in the pathway isoprenoid biosynthesis; isopentenyl diphosphate biosynthesis via DXP pathway; isopentenyl diphosphate from 1-deoxy-D-xylulose 5-phosphate: step 6/6. Catalyzes the conversion of 1-hydroxy-2-methyl-2-(E)-butenyl 4-diphosphate (HMBPP) into a mixture of isopentenyl diphosphate (IPP) and dimethylallyl diphosphate (DMAPP). Acts in the terminal step of the DOXP/MEP pathway for isoprenoid precursor biosynthesis. The protein is 4-hydroxy-3-methylbut-2-enyl diphosphate reductase of Desulfovibrio desulfuricans (strain ATCC 27774 / DSM 6949 / MB).